The chain runs to 533 residues: Lymphocyte cytosolic protein 2 (533 aa).

The SAM domain occupies 15-81 (WDPDSLADYF…INKNEERRSI (67 aa)). At tyrosine 23 the chain carries Phosphotyrosine. The segment at 78-417 (RRSIFTRKPQ…PPSPAEEENS (340 aa)) is disordered. A compositionally biased stretch (acidic residues) spans 108 to 155 (FEEDDYESPNDDQDGEDDGDYESPNEEEEAPVEDDADYEPPPSNDEEA). Pro residues predominate over residues 184–213 (QQPPVPPQRPMAALPPPPAGRNHSPLPPPQ). The residue at position 207 (serine 207) is a Phosphoserine. Composition is skewed to polar residues over residues 337-350 (MSSNTFPSRSTKPS) and 365-376 (SESNSSFPQSAS). 2 positions are modified to phosphoserine: serine 376 and serine 410. Residues 400–411 (LPLPNKPRPPSP) are compositionally biased toward pro residues. Residues 422 to 530 (WYVSYITRPE…RYQCTLTHAA (109 aa)) enclose the SH2 domain.

As to quaternary structure, interacts with SLA. Interacts with CBLB. Interacts with GRB2. Interacts with SHB. Interacts with PRAM1. Interacts (via SH2 domain) with CD6 (via tyrosine phosphorylated C-terminus). Interacts with FYB1 and the phosphorylated form of FYB2. Interacts with 14-3-3 adapter/YWHAZ; this phosphorylation leads to YWHAZ proteolytic degradation. Interacts with VAV1; this interaction plays a role in TCR-mediated cytokine production. Interacts with AGER; this interaction plays an important role in AGER-mediated pro-inflammatory responses and cytokine release. Phosphorylated after T-cell receptor activation by ZAP70, ITK and TXK, which leads to the up-regulation of Th1 preferred cytokine IL-2. SYK-dependent phosphorylation is required for recruitment of PI3K signaling components. In terms of tissue distribution, highly expressed in spleen, thymus and peripheral blood leukocytes. Highly expressed also in T-cell and monocytic cell lines, expressed at lower level in B-cell lines. Not detected in fibroblast or neuroblastoma cell lines.

It is found in the cytoplasm. Functionally, adapter protein primarily involved in signaling pathways within T-cells, as well as other immune cells such as platelets, mast cells, and natural killer (NK) cells. Plays a crucial role for transducing signal from the T-cell receptor (TCR) after antigen recognition leading to T-cell activation. Mechanistically, once phosphorylated by the kinase ZAP70, mediates interactions with the guanine-nucleotide exchange factor VAV1, the adapter protein NCK and the kinase ITK. In turn, stimulates the activation of PKC-theta/PRKCQ and NF-kappa-B transcriptional activity in response to CD3 and CD28 costimulation. Also plays an essential role in AGER-induced signaling pathways including p38 MAPK and ERK1/2 activation leading to cytokine release and pro-inflammatory responses. The protein is Lymphocyte cytosolic protein 2 (LCP2) of Homo sapiens (Human).